The primary structure comprises 948 residues: MLNLLLGDPNVRKVKKYKPLVTEINLLEEDIEPLSDKDLIAKTAEFRQKLDKVSHSPAAEKELLAELLPEAFAVMREASKRVLGLRHFDVQMIGGMILHDGQIAEMKTGEGKTLVATLPSYLNALSGKGAHVVTVNDYLARRDAEWMGQVHRFLGLSVGLIQQGMSPEERRRNYNCDITYATNSELGFDYLRDNMAAVIEEVVQRPFNYAVIDEVDSILIDEARTPLIISGQVDRPSEKYMRASEVAALLQRSTNTDSEEEPDGDYEVDEKGRNVLLTDQGFINAEQLLGVSDLFDSNDPWAHYIFNAIKAKELFIKDVNYIVRGGEIVIVDEFTGRVMPGRRWSDGLHQAVESKEGVEIQPETQTLASITYQNFFLLYPKLSGMTGTAKTEELEFEKTYKLEVTVVPTNRVSRRRDQPDVVYKTEIGKWRAIAADCAELHAEGRPVLVGTTSVEKSEFLSQLLNEQGIPHNLLNAKPENVEREAEIVAQAGRRGAVTISTNMAGRGTDIILGGNADYMARLKLREYWMPQLVSFEEDGFGIAGVAGLEGGRPAAQGFGSPNGQKPRKTWKASSDIFPAELSTEAEKLLKAAVDLGVKTYGGNSLSELVAEDKIATAAEKAPTDDPVIQKLREAYQQVRKEYEAVTKQEQAEVVELGGLHVIGTERHESRRVDNQLRGRAGRQGDPGSTRFFLSLEDNLLRIFGGDRVAKLMNAFRVEEDMPIESGMLTRSLEGAQKKVETYYYDIRKQVFEYDEVMNNQRRAIYAERRRVLEGRELKEQVIQYGERTMDEIVDAHINVDLPSEEWDLEKLVNKVKQFVYLLEDLEAKQLEDLSPEAIKIFLHEQLRIAYDLKEAQIDQIQPGLMRQAERYFILQQIDTLWREHLQAMEALRESVGLRGYGQKDPLLEYKSEGYELFLEMMTAIRRNVIYSMFMFDPQPQARPQAEVV.

Residues Gln91, 109-113, and Asp509 contribute to the ATP site; that span reads GEGKT.

The protein belongs to the SecA family. Monomer and homodimer. Part of the essential Sec protein translocation apparatus which comprises SecA, SecYEG and auxiliary proteins SecDF. Other proteins may also be involved.

The protein localises to the cell inner membrane. Its subcellular location is the cellular thylakoid membrane. The protein resides in the cytoplasm. It carries out the reaction ATP + H2O + cellular proteinSide 1 = ADP + phosphate + cellular proteinSide 2.. Functionally, part of the Sec protein translocase complex. Interacts with the SecYEG preprotein conducting channel. Has a central role in coupling the hydrolysis of ATP to the transfer of proteins into and across the cell membrane, serving as an ATP-driven molecular motor driving the stepwise translocation of polypeptide chains across the membrane. Probably participates in protein translocation into and across both the cytoplasmic and thylakoid membranes in cyanobacterial cells. In Synechococcus elongatus (strain ATCC 33912 / PCC 7942 / FACHB-805) (Anacystis nidulans R2), this protein is Protein translocase subunit SecA.